The chain runs to 1063 residues: MNRNVDKGWQAQIRPNERQSIALQIAQTLRIISPSISEVQLMNMALSFERQAFDGASSKNEYLTTCGKKTAQLRDQIRDTLQATQMKQMPSVYNNAGNVGALPTAGPNRLANNPRVMPRLQNQNVPMQAGMQQFARNMKLTPQQRQFLLQQSQIQQQRQQQQQQSQQPQQTQQPQASSPTAPNTEANQQRSGSVPGRIVPALTQQQLNNLCNQITALLARNGNPPIPMQKLQSMPPARLISIYQNQIQKFRSLQHMQQQQQQQQQQQQQQQQQQQQQQQQQQQQQQQQQKQAPQNAFFPNPQGNVGAQSLQSMSPQDQPSTQQQQPQRTAAPPNNPNVNATNNNRINIEMLNIPVPKQLFDQIPNLPPNVKIWRDVLELGQSQRLPPEQLKLIGMLYRKHLQIILQHRQQQLNKIQNARMNSQNAPNTNKLGNPQPDNTGNPQAFSQQAFAQQQQQQQQQLHRTSNPTSASVTSQNGQQPINTKLSANAAKTNYQSYLTNKARNATQPTQPPVSQVDYSNNLPPNLDTSSTFRSSASPPSAFTKAGNEALSVPLSGARNTAASRPTNLAAGNSSASIVQQLLECGGTMGQQKMTSRIRELTERVMHSLMRPVPLDLPHDQKVMIASLIKSAYPMFSRTNQLICLFYCLTGNEEATIQLIQMRHIFKLQLEGLQQGVFTCAPQTLAKIKEKTSRYFAFVKAQLLRLHHEVNNNNMSIQNALAHISSLRTASINQQQQPQPQSQQQQQASQFPQAPSVSSNVRPINGSIPNAQPSVPGQAQPAAKANSVGNTSFPVDSKLAFQSLDVSQPDLQAKQKIASQVMKHGLKPEDLKLPPSKKKKIENLSTVQKPKDSVVNTPDVIMSSVDEIPSSVSPGTIAKEEGMAKAREEAIANPLKYAIDAFVAVDHEEEVSAIKSSQTPSSILKTPQSFFIPPSTPDLSFTDNKNSLSPSNILSLDGKFSFNDDSELWADLGNEINSEIGFLKEPDTMNLALDADKDKTKMQNKLTQINFDESCFLDPAIDDKDPWNEMLHEKKVLLKQLQVGNEDEDNIAFPTSTNIWQVVI.

Residues 149-175 are compositionally biased toward low complexity; it reads LQQSQIQQQRQQQQQQSQQPQQTQQPQ. Disordered regions lie at residues 149–194, 286–342, 422–482, 500–544, and 728–789; these read LQQS…SGSV, QQQQ…NATN, SQNA…QPIN, NKAR…AFTK, and TASI…SVGN. 2 stretches are compositionally biased toward polar residues: residues 176-192 and 301-310; these read ASSP…QRSG and PQGNVGAQSL. The segment covering 311–342 has biased composition (low complexity); that stretch reads QSMSPQDQPSTQQQQPQRTAAPPNNPNVNATN. A compositionally biased stretch (polar residues) spans 422 to 442; it reads SQNAPNTNKLGNPQPDNTGNP. A compositionally biased stretch (low complexity) spans 443-460; the sequence is QAFSQQAFAQQQQQQQQQ. 2 stretches are compositionally biased toward polar residues: residues 461-482 and 500-527; these read LHRT…QPIN and NKAR…PNLD. Composition is skewed to low complexity over residues 528–542 and 733–758; these read TSST…PSAF and QQQQ…SVSS. Over residues 766–776 the composition is skewed to polar residues; sequence SIPNAQPSVPG. Ser-948 is subject to Phosphoserine.

It belongs to the Mediator complex subunit 15 family. In terms of assembly, component of the Mediator complex. Component of a med15-hrp1 subcomplex, which flexibly associates with the other Mediator components.

The protein localises to the nucleus. Component of the Mediator complex, a coactivator involved in the regulated transcription of nearly all RNA polymerase II-dependent genes. Mediator functions as a bridge to convey information from gene-specific regulatory proteins to the basal RNA polymerase II transcription machinery. Mediator is recruited to promoters by direct interactions with regulatory proteins and serves as a scaffold for the assembly of a functional preinitiation complex with RNA polymerase II and the general transcription factors. Component of a med15-hrp1 subcomplex, linking the Mediator complex to the chromatin-remodeling activity of hrp1 at a distinct subset of hrp1-bound gene promoters. The chain is Mediator of RNA polymerase II transcription subunit 15 (med15) from Schizosaccharomyces pombe (strain 972 / ATCC 24843) (Fission yeast).